We begin with the raw amino-acid sequence, 274 residues long: Mitogen-activated protein kinase 4 (274 aa).

ATP is bound by residues 1–8 (GCGGNGLV) and lysine 23. A Protein kinase domain is found at 1–274 (GCGGNGLVLS…KILTFSPMDR (274 aa)). Aspartate 123 acts as the Proton acceptor in catalysis. Phosphoserine is present on serine 160. Positions 160 to 162 (SEG) match the SEG motif motif.

It belongs to the protein kinase superfamily. CMGC Ser/Thr protein kinase family. MAP kinase subfamily. Homodimer. Heterodimer with ERK3/MAPK6. Interacts with MAPKAPK5. Requires Mg(2+) as cofactor. Phosphorylated by PAK1, PAK2 and PAK3 in the activation loop resulting in catalytic activation. Phosphorylated by MAPKAPK5 at other sites. In terms of tissue distribution, exclusively detected in the brain, where expression is restricted to the choroid plexus and hippocampus, and to a lesser extent in lung.

Its subcellular location is the cytoplasm. It is found in the nucleus. It catalyses the reaction L-seryl-[protein] + ATP = O-phospho-L-seryl-[protein] + ADP + H(+). It carries out the reaction L-threonyl-[protein] + ATP = O-phospho-L-threonyl-[protein] + ADP + H(+). With respect to regulation, activated by phosphorylation in the activation loop. Atypical MAPK protein. Phosphorylates microtubule-associated protein 2 (MAP2) and MAPKAPK5. The precise role of the complex formed with MAPKAPK5 is still unclear, but the complex follows a complex set of phosphorylation events: upon interaction with atypical MAPKAPK5, ERK4/MAPK4 is phosphorylated and then mediates phosphorylation and activation of MAPKAPK5, which in turn phosphorylates ERK4/MAPK4. May promote entry in the cell cycle. The polypeptide is Mitogen-activated protein kinase 4 (Mapk4) (Rattus norvegicus (Rat)).